The following is a 401-amino-acid chain: MTDINTVLAELKRGTDEILSEADLIEKLKENRPLKVKLGADPTAPDIHLGHTVVLNKLRQFQQLGHEVYFLIGDFTGMVGDPSGKNATRPPLSREDVLRNAETYKEQIYKILDPQKTKIVFNSEWLSKLGTXGMIRLASNYTVARMLERDDFKKRFGNNQPIAIHEFIYPLLQGYDSVALDADVELGGTDQKFNLLVGRELQKSAGKKPQVAITLPLLVGLDGEKKMSKSLGNYIGVTEAPSDMFGKVMSISDELMWDWYNLLSFRPLNEIAQLKSEVENGKNPRDVKILLAKELIARFHNEEAANAAEQEFINRFQKGAMPDEMPEFTFSGEMGLATLLKEAGLVPSTSEAIRSAQQGGVKINGEKVDNVKDNAPKGTNVYQVGKRKFARVRLNKVDTVK.

The 'HIGH' region signature appears at Pro-42–His-51. Residues Lys-226 to Ser-230 carry the 'KMSKS' region motif. Lys-229 contacts ATP. Positions Met-334–Leu-394 constitute an S4 RNA-binding domain.

The protein belongs to the class-I aminoacyl-tRNA synthetase family. TyrS type 2 subfamily. As to quaternary structure, homodimer.

The protein localises to the cytoplasm. The catalysed reaction is tRNA(Tyr) + L-tyrosine + ATP = L-tyrosyl-tRNA(Tyr) + AMP + diphosphate + H(+). Catalyzes the attachment of tyrosine to tRNA(Tyr) in a two-step reaction: tyrosine is first activated by ATP to form Tyr-AMP and then transferred to the acceptor end of tRNA(Tyr). In Haemophilus influenzae (strain ATCC 51907 / DSM 11121 / KW20 / Rd), this protein is Tyrosine--tRNA ligase.